We begin with the raw amino-acid sequence, 45 residues long: Large ribosomal subunit protein bL34 (45 aa).

The protein belongs to the bacterial ribosomal protein bL34 family.

In Kocuria rhizophila (strain ATCC 9341 / DSM 348 / NBRC 103217 / DC2201), this protein is Large ribosomal subunit protein bL34.